Reading from the N-terminus, the 76-residue chain is Conotoxin ArMKLT2-032 (76 aa).

The first 22 residues, 1–22, serve as a signal peptide directing secretion; it reads MKLTCVLIIAVLFLTACQLTTG. Residues 23–46 constitute a propeptide that is removed on maturation; it reads ETYSRGEQKDHALRSTDKNSKLTR. Position 47 is a pyrrolidone carboxylic acid (Q47). Cystine bridges form between C48/C62, C55/C66, and C61/C73.

It belongs to the conotoxin O1 superfamily. In terms of tissue distribution, expressed by the venom duct.

The protein resides in the secreted. The polypeptide is Conotoxin ArMKLT2-032 (Conus arenatus (Sand-dusted cone)).